Reading from the N-terminus, the 145-residue chain is MLSVQPDTKPKGCAGCNRKIKDRYLLKALDKYWHEDCLKCACCDCRLGEVGSTLYTKANLILCRRDYLRLFGVTGNCAACSKLIPAFEMVMRAKDNVYHLDCFACQLCNQRFCVGDKFFLKNNMILCQTDYEEGLMKEGYAPQVR.

LIM zinc-binding domains follow at residues 11–73 (KGCA…LFGV) and 75–137 (GNCA…GLMK).

This Bos taurus (Bovine) protein is LIM domain only protein 3 (LMO3).